We begin with the raw amino-acid sequence, 808 residues long: MGEPVLTRVHSLRERMDSTLANHRNEILMFLSRIESHGKGILKPHQLLAEYEAISKEDKLKLDDGHGAFAEVIKSTQEAIVSPPWVALAIRLRPGVWEYVRVNVHHLVVEELSVPQYLQFKEELVIGSSDANFVLELDFAPFTASFPRPTLTKSIGNGVEFLNRHLSAKMFHGKDSMHPLLEFLRLHNYNGKTLMLNNRVQNVNGLQSMLRKAGDYLSTLPSDTPYSEFEHKFQEIGFERGWGDTAERVTEMFHMLLDLLEAPDASTLETFLGKIPMVFNVVILSPHGYFAQENVLGYPDTGGQVVYILDQVPALEREMIKRIKEQGLDIKPRILIVTRLLPDAVGTTCNQRLEKVFGAEHAHILRVPFRTEKGILRKWISRFEVWPYIETFTEDVAKEIALELQAKPDLIIGNYSEGNLVASLLAHKLGVTQCTIAHALEKTKYPDSDIYWEKFDKKYHFSSQFTADLIAMNHTDFIITSTFQEIAGSKDTVGQYESHTAFTMPGLYRVVHGIDVFDPKFNIVSPGADTSVYFSYKEKEKRLTTLHPEIEELLYSSVENEEHLCIIKDKNKPILFTMARLDNVKNLTGFVEWYAKSPKLRELVNLVVVGGDRRKESKDLEEQAQMKKMYELIDTYKLNGQFRWISSQMNRVRNGELYRYIADTKGAFVQPAFYEAFGLTVVEAMTCGLPTFATLHGGPAEIIVHGKSGFHIDPYHGEQVAELLVNFFEKCKTDPSQWDAISAGGLKRIQEKYTWQIYSERLLTLAGVYGFWKHVSKLDRLEIRRYLEMFYALKYRKLAESVPLAKDE.

Residues 277–754 are GT-B glycosyltransferase; the sequence is MVFNVVILSP…GLKRIQEKYT (478 aa).

It belongs to the glycosyltransferase 1 family. Plant sucrose synthase subfamily. As to quaternary structure, homotetramer. As to expression, expressed in stems, in roots at different developmental stages, and in flower buds, flowers and maturing seeds, with the highest levels in strong utilization sinks for sucrose such as growing stems and tap root tips.

The enzyme catalyses an NDP-alpha-D-glucose + D-fructose = a ribonucleoside 5'-diphosphate + sucrose + H(+). Its activity is regulated as follows. Fructose acts as a non-competitive inhibitor with an inhibition constant of 17.2 mM. In contrast, glucose inhibits uncompetitively with an inhibition constant of 4.3 mM. Sucrose-cleaving enzyme that provides UDP-glucose and fructose for various metabolic pathways. The protein is Sucrose synthase isoform 1 of Daucus carota (Wild carrot).